We begin with the raw amino-acid sequence, 396 residues long: Phosphopentomutase (396 aa).

Positions 13, 288, 293, 329, 330, and 341 each coordinate Mn(2+).

This sequence belongs to the phosphopentomutase family. Requires Mn(2+) as cofactor.

It is found in the cytoplasm. The enzyme catalyses 2-deoxy-alpha-D-ribose 1-phosphate = 2-deoxy-D-ribose 5-phosphate. The catalysed reaction is alpha-D-ribose 1-phosphate = D-ribose 5-phosphate. Its pathway is carbohydrate degradation; 2-deoxy-D-ribose 1-phosphate degradation; D-glyceraldehyde 3-phosphate and acetaldehyde from 2-deoxy-alpha-D-ribose 1-phosphate: step 1/2. Functionally, isomerase that catalyzes the conversion of deoxy-ribose 1-phosphate (dRib-1-P) and ribose 1-phosphate (Rib-1-P) to deoxy-ribose 5-phosphate (dRib-5-P) and ribose 5-phosphate (Rib-5-P), respectively. The chain is Phosphopentomutase from Clostridium beijerinckii (strain ATCC 51743 / NCIMB 8052) (Clostridium acetobutylicum).